A 217-amino-acid polypeptide reads, in one-letter code: Probable transaldolase (217 aa).

The active-site Schiff-base intermediate with substrate is K83.

It belongs to the transaldolase family. Type 3B subfamily.

The protein localises to the cytoplasm. The catalysed reaction is D-sedoheptulose 7-phosphate + D-glyceraldehyde 3-phosphate = D-erythrose 4-phosphate + beta-D-fructose 6-phosphate. The protein operates within carbohydrate degradation; pentose phosphate pathway; D-glyceraldehyde 3-phosphate and beta-D-fructose 6-phosphate from D-ribose 5-phosphate and D-xylulose 5-phosphate (non-oxidative stage): step 2/3. In terms of biological role, transaldolase is important for the balance of metabolites in the pentose-phosphate pathway. The protein is Probable transaldolase of Maricaulis maris (strain MCS10) (Caulobacter maris).